Reading from the N-terminus, the 234-residue chain is Adenosine 5'-phosphosulfate reductase (234 aa).

The [4Fe-4S] cluster site is built by Cys-120, Cys-121, Cys-203, and Cys-206. The active-site Nucleophile; cysteine thiosulfonate intermediate is the Cys-229.

The protein belongs to the PAPS reductase family. CysH subfamily. [4Fe-4S] cluster serves as cofactor.

Its subcellular location is the cytoplasm. It carries out the reaction [thioredoxin]-disulfide + sulfite + AMP + 2 H(+) = adenosine 5'-phosphosulfate + [thioredoxin]-dithiol. Its pathway is sulfur metabolism; hydrogen sulfide biosynthesis; sulfite from sulfate. Functionally, catalyzes the formation of sulfite from adenosine 5'-phosphosulfate (APS) using thioredoxin as an electron donor. This chain is Adenosine 5'-phosphosulfate reductase, found in Bacillus mycoides (strain KBAB4) (Bacillus weihenstephanensis).